The primary structure comprises 317 residues: Ribonuclease H2 subunit A (317 aa).

In terms of domain architecture, RNase H type-2 spans 43–270 (PCCLGVDEAG…AKDMLETKGG (228 aa)). A divalent metal cation is bound by residues Asp-49, Glu-50, and Asp-166.

Belongs to the RNase HII family. Eukaryotic subfamily. Requires Mn(2+) as cofactor. Mg(2+) serves as cofactor.

It carries out the reaction Endonucleolytic cleavage to 5'-phosphomonoester.. In terms of biological role, endonuclease that specifically degrades the RNA of RNA-DNA hybrids. Participates in DNA replication. The protein is Ribonuclease H2 subunit A (rnh-201) of Neurospora crassa (strain ATCC 24698 / 74-OR23-1A / CBS 708.71 / DSM 1257 / FGSC 987).